The following is a 521-amino-acid chain: Phosphoenolpyruvate carboxykinase (ATP) (521 aa).

Arg-52, Tyr-186, and Lys-192 together coordinate substrate. ATP-binding positions include Lys-192, His-211, and 227–235 (GLSGTGKTT). 2 residues coordinate Mn(2+): Lys-192 and His-211. Mn(2+) is bound at residue Asp-248. Residues Glu-276, Arg-313, 432-433 (RI), and Thr-438 contribute to the ATP site. Residue Arg-313 participates in substrate binding.

It belongs to the phosphoenolpyruvate carboxykinase (ATP) family. Mn(2+) serves as cofactor.

The protein localises to the cytoplasm. It catalyses the reaction oxaloacetate + ATP = phosphoenolpyruvate + ADP + CO2. It functions in the pathway carbohydrate biosynthesis; gluconeogenesis. Its function is as follows. Involved in the gluconeogenesis. Catalyzes the conversion of oxaloacetate (OAA) to phosphoenolpyruvate (PEP) through direct phosphoryl transfer between the nucleoside triphosphate and OAA. This is Phosphoenolpyruvate carboxykinase (ATP) from Caldanaerobacter subterraneus subsp. tengcongensis (strain DSM 15242 / JCM 11007 / NBRC 100824 / MB4) (Thermoanaerobacter tengcongensis).